Reading from the N-terminus, the 343-residue chain is Glucokinase (343 aa).

21–26 serves as a coordination point for ATP; that stretch reads ADVGGT.

Belongs to the bacterial glucokinase family.

Its subcellular location is the cytoplasm. It catalyses the reaction D-glucose + ATP = D-glucose 6-phosphate + ADP + H(+). The protein is Glucokinase of Cupriavidus pinatubonensis (strain JMP 134 / LMG 1197) (Cupriavidus necator (strain JMP 134)).